Reading from the N-terminus, the 258-residue chain is Snake venom serine protease HS114 (258 aa).

A signal peptide spans 1–18; sequence MVLVRVVANLLILQLSYA. Residues 19-24 constitute a propeptide that is removed on maturation; the sequence is QKVSEL. In terms of domain architecture, Peptidase S1 spans 25-249; it reads VVGGDECNIN…YNTWIESVIA (225 aa). 6 disulfide bridges follow: cysteine 31-cysteine 163, cysteine 50-cysteine 66, cysteine 98-cysteine 256, cysteine 142-cysteine 210, cysteine 174-cysteine 189, and cysteine 200-cysteine 225. Asparagine 44 is a glycosylation site (N-linked (GlcNAc...) asparagine). Catalysis depends on charge relay system residues histidine 65 and aspartate 110. Serine 204 acts as the Charge relay system in catalysis.

Belongs to the peptidase S1 family. Snake venom subfamily. In terms of assembly, monomer. In terms of processing, N-glycosylated. Contains approximately 10% carbohydrates. In terms of tissue distribution, expressed by the venom gland.

Its subcellular location is the secreted. Its activity is regulated as follows. Inhibited by benzamidine, PMSF, leupeptin, SDS and DTT, but not by EDTA, and commercial antivenom. In terms of biological role, snake venom serine protease that shows non-specific action on fibrinogen. It preferentially degrades fibrinogen Aalpha (FGA), releasing fibrinopeptide A, and shows a lower activity on fibrinogen Bbeta (FGB), releasing fibrinopeptide B and other uncommon fibrinopeptides. Also shows low fibrinolytic activity compared to plasmin. Has high enzymatic activity on the substrates for activated protein C and factor XIa, and for thrombin. Shows a wide activity spectrum at different peptide sequences, with a preferential cleavage at Lys-|-Xaa over Arg-|-Xaa bonds. The polypeptide is Snake venom serine protease HS114 (Bothrops jararaca (Jararaca)).